The chain runs to 176 residues: Cytochrome b (176 aa).

A run of 3 helical transmembrane segments spans residues 33–53 (FGSLLGICLALQILTGLFLAM), 77–98 (WILRYLHANGASMFFICLYLHV), and 113–133 (WNIGVTPLFAVMATAFMGYVL). Residues histidine 83 and histidine 97 each contribute to the heme b site.

Belongs to the cytochrome b family. As to quaternary structure, the cytochrome bc1 complex contains 11 subunits: 3 respiratory subunits (MT-CYB, CYC1 and UQCRFS1), 2 core proteins (UQCRC1 and UQCRC2) and 6 low-molecular weight proteins (UQCRH/QCR6, UQCRB/QCR7, UQCRQ/QCR8, UQCR10/QCR9, UQCR11/QCR10 and a cleavage product of UQCRFS1). This cytochrome bc1 complex then forms a dimer. Heme b serves as cofactor.

The protein localises to the mitochondrion inner membrane. Its function is as follows. Component of the ubiquinol-cytochrome c reductase complex (complex III or cytochrome b-c1 complex) that is part of the mitochondrial respiratory chain. The b-c1 complex mediates electron transfer from ubiquinol to cytochrome c. Contributes to the generation of a proton gradient across the mitochondrial membrane that is then used for ATP synthesis. The sequence is that of Cytochrome b (MT-CYB) from Myotis leibii (Eastern small-footed myotis).